The sequence spans 177 residues: Large ribosomal subunit protein uL6 (177 aa).

It belongs to the universal ribosomal protein uL6 family. As to quaternary structure, part of the 50S ribosomal subunit.

This protein binds to the 23S rRNA, and is important in its secondary structure. It is located near the subunit interface in the base of the L7/L12 stalk, and near the tRNA binding site of the peptidyltransferase center. The sequence is that of Large ribosomal subunit protein uL6 from Vibrio cholerae serotype O1 (strain ATCC 39315 / El Tor Inaba N16961).